The sequence spans 229 residues: Flagellar L-ring protein (229 aa).

An N-terminal signal peptide occupies residues 1–25 (MKQVRLPSSATVRAACAVAVAALAG). Cys-26 carries the N-palmitoyl cysteine lipid modification. Cys-26 carries S-diacylglycerol cysteine lipidation.

It belongs to the FlgH family. In terms of assembly, the basal body constitutes a major portion of the flagellar organelle and consists of four rings (L,P,S, and M) mounted on a central rod.

The protein resides in the cell outer membrane. It is found in the bacterial flagellum basal body. Assembles around the rod to form the L-ring and probably protects the motor/basal body from shearing forces during rotation. The polypeptide is Flagellar L-ring protein (Burkholderia cenocepacia (strain ATCC BAA-245 / DSM 16553 / LMG 16656 / NCTC 13227 / J2315 / CF5610) (Burkholderia cepacia (strain J2315))).